Reading from the N-terminus, the 304-residue chain is Bifunctional protein FolD 3 (304 aa).

Residues 172–174, Ser197, and Ile238 contribute to the NADP(+) site; that span reads GRS.

This sequence belongs to the tetrahydrofolate dehydrogenase/cyclohydrolase family. Homodimer.

It catalyses the reaction (6R)-5,10-methylene-5,6,7,8-tetrahydrofolate + NADP(+) = (6R)-5,10-methenyltetrahydrofolate + NADPH. The catalysed reaction is (6R)-5,10-methenyltetrahydrofolate + H2O = (6R)-10-formyltetrahydrofolate + H(+). Its pathway is one-carbon metabolism; tetrahydrofolate interconversion. Functionally, catalyzes the oxidation of 5,10-methylenetetrahydrofolate to 5,10-methenyltetrahydrofolate and then the hydrolysis of 5,10-methenyltetrahydrofolate to 10-formyltetrahydrofolate. The polypeptide is Bifunctional protein FolD 3 (Rhizorhabdus wittichii (strain DSM 6014 / CCUG 31198 / JCM 15750 / NBRC 105917 / EY 4224 / RW1) (Sphingomonas wittichii)).